Here is a 404-residue protein sequence, read N- to C-terminus: Phosphopentomutase (404 aa).

Mn(2+) is bound by residues Asp10, Asp303, His308, Asp344, His345, and His356.

The protein belongs to the phosphopentomutase family. Mn(2+) serves as cofactor.

It localises to the cytoplasm. It catalyses the reaction 2-deoxy-alpha-D-ribose 1-phosphate = 2-deoxy-D-ribose 5-phosphate. The catalysed reaction is alpha-D-ribose 1-phosphate = D-ribose 5-phosphate. Its pathway is carbohydrate degradation; 2-deoxy-D-ribose 1-phosphate degradation; D-glyceraldehyde 3-phosphate and acetaldehyde from 2-deoxy-alpha-D-ribose 1-phosphate: step 1/2. In terms of biological role, isomerase that catalyzes the conversion of deoxy-ribose 1-phosphate (dRib-1-P) and ribose 1-phosphate (Rib-1-P) to deoxy-ribose 5-phosphate (dRib-5-P) and ribose 5-phosphate (Rib-5-P), respectively. The polypeptide is Phosphopentomutase (Shewanella baltica (strain OS223)).